We begin with the raw amino-acid sequence, 49 residues long: Large ribosomal subunit protein bL33B (49 aa).

The protein belongs to the bacterial ribosomal protein bL33 family.

The sequence is that of Large ribosomal subunit protein bL33B from Oceanobacillus iheyensis (strain DSM 14371 / CIP 107618 / JCM 11309 / KCTC 3954 / HTE831).